A 1470-amino-acid polypeptide reads, in one-letter code: ABC transporter G family member 48 (1470 aa).

Residues 1-47 (MAAAPSASGRRSMSWGSSISQSFRQAEADDPFGRAASQQGHDDDEEN) are disordered. The segment covering 9-24 (GRRSMSWGSSISQSFR) has biased composition (polar residues). An ABC transporter 1 domain is found at 172–445 (GLIGRFGSSN…FENAGFRCPE (274 aa)). Position 205-212 (205-212 (GPPSSGKS)) interacts with ATP. In terms of domain architecture, ABC transmembrane type-2 1 spans 523–736 (ESLRAVMSRE…SQQAISINEF (214 aa)). The next 6 helical transmembrane spans lie at 541–561 (FIYI…MTVF), 577–597 (FLGA…AELQ), 629–649 (VPVS…VMGF), 660–680 (FIAF…LGAI), 686–706 (VANT…GFLI), and 772–792 (FWIS…LYIL). The interval 828–852 (QIVHNNGASNTSATSSIPMSGSRST) is disordered. Low complexity predominate over residues 832-843 (NNGASNTSATSS). Residues 869–1121 (LCFNHVNYYV…KLVEYFEAVP (253 aa)) form the ABC transporter 2 domain. 914 to 921 (GVSGAGKT) is an ATP binding site. In terms of domain architecture, ABC transmembrane type-2 2 spans 1194 to 1408 (SQCIANFWKQ…TIYGVVASQF (215 aa)). 7 consecutive transmembrane segments (helical) span residues 1215-1234 (AMRY…VFWQ), 1249-1271 (LGAT…QPVV), 1301-1321 (VIYN…MIGY), 1331-1351 (FMFF…MLVA), 1359-1379 (ANIL…FLVV), 1389-1409 (WYYW…SQFG), and 1439-1459 (FLGY…FIFG).

The protein belongs to the ABC transporter superfamily. ABCG family. PDR (TC 3.A.1.205) subfamily.

Its subcellular location is the membrane. In terms of biological role, may be a general defense protein. The sequence is that of ABC transporter G family member 48 from Oryza sativa subsp. japonica (Rice).